A 558-amino-acid chain; its full sequence is T-complex protein 1 subunit gamma (558 aa).

A disulfide bond links cysteine 381 and cysteine 387.

This sequence belongs to the TCP-1 chaperonin family. In terms of assembly, heterooligomeric complex of about 850 to 900 kDa that forms two stacked rings, 12 to 16 nm in diameter.

The protein localises to the cytoplasm. Its function is as follows. Molecular chaperone; assists the folding of proteins upon ATP hydrolysis. Known to play a role, in vitro, in the folding of actin and tubulin. The polypeptide is T-complex protein 1 subunit gamma (Thalassiosira weissflogii (Marine diatom)).